The chain runs to 243 residues: Tryptophan synthase alpha chain (243 aa).

Catalysis depends on proton acceptor residues glutamate 32 and aspartate 43.

The protein belongs to the TrpA family. In terms of assembly, tetramer of two alpha and two beta chains.

It is found in the plastid. It localises to the chloroplast. It catalyses the reaction (1S,2R)-1-C-(indol-3-yl)glycerol 3-phosphate + L-serine = D-glyceraldehyde 3-phosphate + L-tryptophan + H2O. It functions in the pathway amino-acid biosynthesis; L-tryptophan biosynthesis; L-tryptophan from chorismate: step 5/5. Its function is as follows. The alpha subunit is responsible for the aldol cleavage of indoleglycerol phosphate to indole and glyceraldehyde 3-phosphate. This is Tryptophan synthase alpha chain from Cyanidioschyzon merolae (strain NIES-3377 / 10D) (Unicellular red alga).